A 604-amino-acid chain; its full sequence is Replication protein A 70 kDa DNA-binding subunit B (604 aa).

Positions 170-256 form a DNA-binding region, OB; sequence WTIKVRVTNK…QNDYEMTLNE (87 aa). The C4-type zinc finger occupies 468-488; that stretch reads CKTCNKKVTEAMDSGYWCESC.

The protein belongs to the replication factor A protein 1 family. Heterotrimer of RPA1, RPA2 and RPA3 (canonical replication protein A complex).

It localises to the nucleus. Component of the replication protein A complex (RPA) required for DNA recombination, repair and replication. The activity of RPA is mediated by single-stranded DNA binding and protein interactions. Probably involved in repair of double-strand DNA breaks (DSBs) induced by genotoxic stresses. The sequence is that of Replication protein A 70 kDa DNA-binding subunit B (RPA1B) from Arabidopsis thaliana (Mouse-ear cress).